The sequence spans 42 residues: Photosystem I reaction center subunit IX (42 aa).

Residues 8-28 (YLSTAPVLFTVWLSFTASFII) traverse the membrane as a helical segment.

The protein belongs to the PsaJ family.

It localises to the plastid. The protein localises to the chloroplast thylakoid membrane. In terms of biological role, may help in the organization of the PsaE and PsaF subunits. The chain is Photosystem I reaction center subunit IX from Rhodomonas salina (Cryptomonas salina).